An 875-amino-acid chain; its full sequence is Probable ubiquitin carboxyl-terminal hydrolase 7 (875 aa).

The UBP-type zinc-finger motif lies at 54–167; sequence KECSHLKKGV…RDVQQFICSN (114 aa). 12 residues coordinate Zn(2+): Cys-56, His-58, Cys-83, Cys-86, Cys-101, Cys-104, Cys-109, His-116, His-120, His-127, Cys-140, and Cys-143. In terms of domain architecture, USP spans 208–875; that stretch reads PGLKNLGATC…EAYMLFYERV (668 aa). The active-site Nucleophile is Cys-217. 2 positions are modified to phosphoserine: Ser-333 and Ser-337. The tract at residues 396 to 486 is disordered; it reads YSKELSQSSD…ASPKKEVLKS (91 aa). Low complexity predominate over residues 401-438; it reads SQSSDSSQHQHDSFLPANSSPLAASSTKSLPSSELLDS. Basic and acidic residues predominate over residues 473–484; sequence NHEEASPKKEVL. A phosphoserine mark is found at Ser-486 and Ser-493. The span at 575-586 shows a compositional bias: basic residues; the sequence is RSRFSRSPKKSS. The segment at 575-628 is disordered; the sequence is RSRFSRSPKKSSVKIVVDNANDDTDQAPTTNSSSLNENLLGGHASENDKSLKQS. A compositionally biased stretch (polar residues) spans 600–611; that stretch reads QAPTTNSSSLNE. Ser-645 carries the phosphoserine modification. Residue His-812 is the Proton acceptor of the active site.

Belongs to the peptidase C19 family.

It catalyses the reaction Thiol-dependent hydrolysis of ester, thioester, amide, peptide and isopeptide bonds formed by the C-terminal Gly of ubiquitin (a 76-residue protein attached to proteins as an intracellular targeting signal).. The chain is Probable ubiquitin carboxyl-terminal hydrolase 7 (ubp7) from Schizosaccharomyces pombe (strain 972 / ATCC 24843) (Fission yeast).